A 541-amino-acid polypeptide reads, in one-letter code: Tyrosine-protein kinase Yes (541 aa).

Basic and acidic residues predominate over residues 1-20; that stretch reads MGCIKSKEDKGPAMKYRTDN. The disordered stretch occupies residues 1-43; sequence MGCIKSKEDKGPAMKYRTDNTPEPISSHVSHYGSDSSQATQSP. Residue glycine 2 is the site of N-myristoyl glycine attachment. Cysteine 3 is lipidated: S-palmitoyl cysteine; in membrane form. Over residues 26-37 the composition is skewed to low complexity; that stretch reads SSHVSHYGSDSS. Positions 89–150 constitute an SH3 domain; that stretch reads GGVTVFVALY…PSNYVAPADS (62 aa). The SH2 domain maps to 156–253; sequence WYFGKMGRKD…GLCHKLTTVC (98 aa). Residues 275 to 528 enclose the Protein kinase domain; that stretch reads LRLEVKLGQG…YIQSFLEDYF (254 aa). Residues 281 to 289 and lysine 303 contribute to the ATP site; that span reads LGQGCFGEV. Residue aspartate 394 is the Proton acceptor of the active site. Tyrosine 424 is subject to Phosphotyrosine; by autocatalysis. Position 535 is a phosphotyrosine; by CSK (tyrosine 535).

The protein belongs to the protein kinase superfamily. Tyr protein kinase family. SRC subfamily. In terms of processing, autophosphorylation at Tyr-424 maintains enzyme activity. Palmitoylation at Cys-3 promotes membrane localization.

It localises to the cell membrane. The protein resides in the cytoplasm. It is found in the cytoskeleton. The protein localises to the microtubule organizing center. Its subcellular location is the centrosome. It localises to the cytosol. The protein resides in the cell junction. The catalysed reaction is L-tyrosyl-[protein] + ATP = O-phospho-L-tyrosyl-[protein] + ADP + H(+). Non-receptor protein tyrosine kinase that is involved in the regulation of cell growth and survival, apoptosis, cell-cell adhesion, cytoskeleton remodeling, differentiation, G2/M progression and cytokinesis. This chain is Tyrosine-protein kinase Yes (YES1), found in Gallus gallus (Chicken).